Consider the following 658-residue polypeptide: MSRIAALPDHLVNQIAAGEVVERPANALKEIVENSIDAGATAIDVELAGGGIRLIRVSDNGGGIHPDDIELALHRHATSKIKTLNDLEHVASMGFRGEGLASIASVSRLTLTSRQEDSSHATQVKAEDGKLSSPTAAAHPVGTTIEAAELFFNTPARRKFLKSEATEYAHCATMLERLALAHPHIAFSLKRDGKQVFKLPAQSLHERIAAIVGDDFQTASLEIDSDNGALRLYGAIAKPTFAKGKTDKQYCFVNHRFVRDKVMLHAVKQAYRDVLHNALTPAFVLFLDLPPEAVDVNVHPTKTEIRFRDSQQVHQLVFHTLNKALADTRADLTESVSNAGEVLHDITGVTPAPMPSENNSENLFDRASNYPTGNKSDTHNAFGSSGKTAPMPYQSAYAPQQRSLSLRESRAAMNTYAELYKKTDDIDLELSRFEQARFGNMPSETPAPQTDTPLSDGIPSPSELPPLGFAIAQLLGIYILAQAEDSLLLIDMHAAAERVNYEKMKRQRQENGNLQSQRLLIPVTFAASHEECAALADHAEALAGFGLELSDMGGNTLAVRAAPAMLGKSDVVSLARDVLNEFAQVGSSQTIEEHENHILATMSCHGSIRAGRRLTLPEMNALLRDMENTPRSNQCNHGRPTWVKLTLKELDALFLRGQ.

The span at R114–K130 shows a compositional bias: basic and acidic residues. Positions R114–A137 are disordered.

The protein belongs to the DNA mismatch repair MutL/HexB family.

Functionally, this protein is involved in the repair of mismatches in DNA. It is required for dam-dependent methyl-directed DNA mismatch repair. May act as a 'molecular matchmaker', a protein that promotes the formation of a stable complex between two or more DNA-binding proteins in an ATP-dependent manner without itself being part of a final effector complex. The chain is DNA mismatch repair protein MutL from Neisseria meningitidis serogroup C / serotype 2a (strain ATCC 700532 / DSM 15464 / FAM18).